A 591-amino-acid polypeptide reads, in one-letter code: Probable translation initiation factor IF-2 (591 aa).

A tr-type G domain is found at Ile6–Met220. Positions Gly15 to Thr22 are G1. Gly15–Thr22 provides a ligand contact to GTP. The G2 stretch occupies residues Ala40–His44. The G3 stretch occupies residues Asp76–Gly79. Residues Asp76 to His80 and Thr130 to Asp133 each bind GTP. A G4 region spans residues Thr130 to Asp133. Positions Ser198–His200 are G5.

The protein belongs to the TRAFAC class translation factor GTPase superfamily. Classic translation factor GTPase family. IF-2 subfamily.

Functionally, function in general translation initiation by promoting the binding of the formylmethionine-tRNA to ribosomes. Seems to function along with eIF-2. This is Probable translation initiation factor IF-2 from Methanoregula boonei (strain DSM 21154 / JCM 14090 / 6A8).